The primary structure comprises 829 residues: Receptor-type tyrosine-protein phosphatase alpha (829 aa).

Residues 1–19 (MDSWFILVLFGSGLIHVSA) form the signal peptide. The Extracellular segment spans residues 20 to 142 (NNATTVSPSL…ETFPPADETP (123 aa)). 8 N-linked (GlcNAc...) asparagine glycosylation sites follow: Asn21, Asn47, Asn51, Asn68, Asn80, Asn86, Asn104, and Asn124. A disordered region spans residues 79–106 (VNSSHSDNGTRRAASTESGGTTISPNGS). The helical transmembrane segment at 143-166 (IIAVMVALSSLLVIVFIIIVLYML) threads the bilayer. Residues 167-829 (RFKKYKQAGS…DAFSDYANFK (663 aa)) lie on the Cytoplasmic side of the membrane. Ser202 and Ser204 each carry phosphoserine. Tyrosine-protein phosphatase domains lie at 232-528 (FREE…LLEH) and 560-818 (LEEE…VQEY). Residues Asp437, 469–475 (CSAGVGR), and Gln513 contribute to the substrate site. The active-site Phosphocysteine intermediate is Cys469. Cys759 functions as the Phosphocysteine intermediate in the catalytic mechanism. Position 825 is a phosphotyrosine (Tyr825).

This sequence belongs to the protein-tyrosine phosphatase family. Receptor class 4 subfamily. In terms of assembly, part of a complex comprised of PTPRA, BCAR1, BCAR3 (via SH2 domain), and SRC. Within the complex, interacts (when phosphorylated on Tyr-825) with BCAR3 (via SH2 domain). Interacts with GRB2. In terms of processing, integrin binding to extracellular matrix induces phosphorylation at Tyr-825 which induces PTPRA localization and recruitment of BCAR3, BCAR1 and CRK to focal adhesions. Widely expressed. Highest expression in brain and kidney.

The protein resides in the cell membrane. It is found in the cell junction. Its subcellular location is the focal adhesion. It catalyses the reaction O-phospho-L-tyrosyl-[protein] + H2O = L-tyrosyl-[protein] + phosphate. In terms of biological role, tyrosine protein phosphatase which is involved in integrin-mediated focal adhesion formation. Following integrin engagement, specifically recruits BCAR3, BCAR1 and CRK to focal adhesions thereby promoting SRC-mediated phosphorylation of BRAC1 and the subsequent activation of PAK and small GTPase RAC1 and CDC42. In Mus musculus (Mouse), this protein is Receptor-type tyrosine-protein phosphatase alpha (Ptpra).